Here is a 157-residue protein sequence, read N- to C-terminus: UPF0127 protein TK1120 (157 aa).

Belongs to the UPF0127 family.

This chain is UPF0127 protein TK1120, found in Thermococcus kodakarensis (strain ATCC BAA-918 / JCM 12380 / KOD1) (Pyrococcus kodakaraensis (strain KOD1)).